A 520-amino-acid chain; its full sequence is CBL-interacting serine/threonine-protein kinase 18 (520 aa).

2 disordered regions span residues 1 to 29 and 48 to 67; these read MAQALAQPPLVVTTVVPDPPPPPPPPHPK and TDKDGNISPQSPRSPRSPRN. Residues 17–29 show a composition bias toward pro residues; the sequence is PDPPPPPPPPHPK. Over residues 55–66 the composition is skewed to low complexity; sequence SPQSPRSPRSPR. In terms of domain architecture, Protein kinase spans 74–328; sequence YELGKLLGHG…IPEIMKNRWF (255 aa). Residues 80 to 88 and K103 contribute to the ATP site; that span reads LGHGTFAKV. The Proton acceptor role is filled by D196. Positions 214–243 are activation loop; sequence DFGLSAVAEQLRQDGLCHTFCGTPAYIAPE. S218 bears the Phosphoserine mark. T232 is subject to Phosphothreonine. The disordered stretch occupies residues 349 to 368; it reads EDEEEEASSSGRSSTVSESD. Over residues 356–366 the composition is skewed to low complexity; the sequence is SSSGRSSTVSE. The 25-residue stretch at 382–406 folds into the NAF domain; the sequence is PRPSSLNAFDIISFSSGFDLSGLFE. A PPI region spans residues 410–439; sequence GEGTRFVSGAPVSKIISKLEEIAKIVSFTV.

This sequence belongs to the protein kinase superfamily. CAMK Ser/Thr protein kinase family. SNF1 subfamily. In terms of assembly, interacts with CBL1 and CBL9. The cofactor is Mn(2+).

It catalyses the reaction L-seryl-[protein] + ATP = O-phospho-L-seryl-[protein] + ADP + H(+). The enzyme catalyses L-threonyl-[protein] + ATP = O-phospho-L-threonyl-[protein] + ADP + H(+). In terms of biological role, CIPK serine-threonine protein kinases interact with CBL proteins. Binding of a CBL protein to the regulatory NAF domain of CIPK protein lead to the activation of the kinase in a calcium-dependent manner. This Arabidopsis thaliana (Mouse-ear cress) protein is CBL-interacting serine/threonine-protein kinase 18 (CIPK18).